A 331-amino-acid chain; its full sequence is 4-hydroxythreonine-4-phosphate dehydrogenase (331 aa).

2 residues coordinate substrate: His137 and Thr138. His167, His212, and His267 together coordinate a divalent metal cation. 3 residues coordinate substrate: Lys275, Asn284, and Arg293.

The protein belongs to the PdxA family. Homodimer. Zn(2+) is required as a cofactor. It depends on Mg(2+) as a cofactor. The cofactor is Co(2+).

The protein resides in the cytoplasm. It catalyses the reaction 4-(phosphooxy)-L-threonine + NAD(+) = 3-amino-2-oxopropyl phosphate + CO2 + NADH. It participates in cofactor biosynthesis; pyridoxine 5'-phosphate biosynthesis; pyridoxine 5'-phosphate from D-erythrose 4-phosphate: step 4/5. Catalyzes the NAD(P)-dependent oxidation of 4-(phosphooxy)-L-threonine (HTP) into 2-amino-3-oxo-4-(phosphooxy)butyric acid which spontaneously decarboxylates to form 3-amino-2-oxopropyl phosphate (AHAP). In Yersinia pestis bv. Antiqua (strain Angola), this protein is 4-hydroxythreonine-4-phosphate dehydrogenase.